A 369-amino-acid polypeptide reads, in one-letter code: Flagellar P-ring protein (369 aa).

The first 22 residues, 1 to 22, serve as a signal peptide directing secretion; it reads MIKLKQLIAATLLLSTAFGVHA.

The protein belongs to the FlgI family. As to quaternary structure, the basal body constitutes a major portion of the flagellar organelle and consists of four rings (L,P,S, and M) mounted on a central rod.

Its subcellular location is the periplasm. It localises to the bacterial flagellum basal body. Assembles around the rod to form the L-ring and probably protects the motor/basal body from shearing forces during rotation. In Pseudomonas syringae pv. syringae (strain B728a), this protein is Flagellar P-ring protein.